Reading from the N-terminus, the 313-residue chain is Dihydroorotate dehydrogenase B (NAD(+)), catalytic subunit (313 aa).

FMN contacts are provided by residues serine 21 and 45–46 (KA). Substrate-binding positions include lysine 45 and 69-73 (NAIGL). The FMN site is built by asparagine 99 and asparagine 127. Residue asparagine 127 coordinates substrate. Cysteine 130 functions as the Nucleophile in the catalytic mechanism. Position 191 (isoleucine 191) interacts with FMN. Position 192-193 (192-193 (NT)) interacts with substrate. Residues glycine 217, 243–244 (GG), and 265–266 (GT) each bind FMN.

Belongs to the dihydroorotate dehydrogenase family. Type 1 subfamily. Heterotetramer of 2 PyrK and 2 PyrD type B subunits. FMN serves as cofactor.

Its subcellular location is the cytoplasm. The catalysed reaction is (S)-dihydroorotate + NAD(+) = orotate + NADH + H(+). It participates in pyrimidine metabolism; UMP biosynthesis via de novo pathway; orotate from (S)-dihydroorotate (NAD(+) route): step 1/1. Catalyzes the conversion of dihydroorotate to orotate with NAD(+) as electron acceptor. The sequence is that of Dihydroorotate dehydrogenase B (NAD(+)), catalytic subunit (pyrD) from Bacillus caldolyticus.